The following is a 102-amino-acid chain: Large ribosomal subunit protein bL21 (102 aa).

It belongs to the bacterial ribosomal protein bL21 family. As to quaternary structure, part of the 50S ribosomal subunit. Contacts protein L20.

This protein binds to 23S rRNA in the presence of protein L20. The polypeptide is Large ribosomal subunit protein bL21 (Listeria monocytogenes serotype 4b (strain CLIP80459)).